Reading from the N-terminus, the 663-residue chain is DNA topoisomerase 4 subunit B (663 aa).

ATP is bound by residues Tyr7, Asn47, Asp74, 114–120 (GLHGVGA), and Lys341. The segment at 386-416 (REAARKAREDARSGKKNKRKDTLLSGKLTPA) is disordered. Basic and acidic residues predominate over residues 387 to 398 (EAARKAREDARS). The 115-residue stretch at 424–538 (NELYLVEGDS…AGRVFIALPP (115 aa)) folds into the Toprim domain. Mg(2+)-binding residues include Glu430, Asp503, and Asp505.

The protein belongs to the type II topoisomerase family. ParE type 2 subfamily. In terms of assembly, heterotetramer composed of ParC and ParE. The cofactor is Mg(2+). Requires Mn(2+) as cofactor. Ca(2+) is required as a cofactor.

It carries out the reaction ATP-dependent breakage, passage and rejoining of double-stranded DNA.. Functionally, topoisomerase IV is essential for chromosome segregation. It relaxes supercoiled DNA. Performs the decatenation events required during the replication of a circular DNA molecule. The sequence is that of DNA topoisomerase 4 subunit B from Staphylococcus aureus (strain Mu50 / ATCC 700699).